A 307-amino-acid polypeptide reads, in one-letter code: Holliday junction branch migration complex subunit RuvB (307 aa).

The tract at residues Met1–Tyr167 is large ATPase domain (RuvB-L). ATP contacts are provided by residues Ile5, Gly48, Lys51, Thr52, Thr53, Asp114–Phe116, Arg157, Tyr167, and Arg204. Position 52 (Thr52) interacts with Mg(2+). Positions Ser168 to Met233 are small ATPAse domain (RuvB-S). The segment at Lys236–Cys307 is head domain (RuvB-H). Residues Lys289 and Arg294 each coordinate DNA.

The protein belongs to the RuvB family. As to quaternary structure, homohexamer. Forms an RuvA(8)-RuvB(12)-Holliday junction (HJ) complex. HJ DNA is sandwiched between 2 RuvA tetramers; dsDNA enters through RuvA and exits via RuvB. An RuvB hexamer assembles on each DNA strand where it exits the tetramer. Each RuvB hexamer is contacted by two RuvA subunits (via domain III) on 2 adjacent RuvB subunits; this complex drives branch migration. In the full resolvosome a probable DNA-RuvA(4)-RuvB(12)-RuvC(2) complex forms which resolves the HJ.

The protein localises to the cytoplasm. The catalysed reaction is ATP + H2O = ADP + phosphate + H(+). Functionally, the RuvA-RuvB-RuvC complex processes Holliday junction (HJ) DNA during genetic recombination and DNA repair, while the RuvA-RuvB complex plays an important role in the rescue of blocked DNA replication forks via replication fork reversal (RFR). RuvA specifically binds to HJ cruciform DNA, conferring on it an open structure. The RuvB hexamer acts as an ATP-dependent pump, pulling dsDNA into and through the RuvAB complex. RuvB forms 2 homohexamers on either side of HJ DNA bound by 1 or 2 RuvA tetramers; 4 subunits per hexamer contact DNA at a time. Coordinated motions by a converter formed by DNA-disengaged RuvB subunits stimulates ATP hydrolysis and nucleotide exchange. Immobilization of the converter enables RuvB to convert the ATP-contained energy into a lever motion, pulling 2 nucleotides of DNA out of the RuvA tetramer per ATP hydrolyzed, thus driving DNA branch migration. The RuvB motors rotate together with the DNA substrate, which together with the progressing nucleotide cycle form the mechanistic basis for DNA recombination by continuous HJ branch migration. Branch migration allows RuvC to scan DNA until it finds its consensus sequence, where it cleaves and resolves cruciform DNA. The chain is Holliday junction branch migration complex subunit RuvB from Mycoplasma pneumoniae (strain ATCC 29342 / M129 / Subtype 1) (Mycoplasmoides pneumoniae).